The primary structure comprises 428 residues: Light-independent protochlorophyllide reductase subunit N (428 aa).

Residues Cys16, Cys41, and Cys102 each contribute to the [4Fe-4S] cluster site.

It belongs to the BchN/ChlN family. Protochlorophyllide reductase is composed of three subunits; ChlL, ChlN and ChlB. Forms a heterotetramer of two ChlB and two ChlN subunits. The cofactor is [4Fe-4S] cluster.

The catalysed reaction is chlorophyllide a + oxidized 2[4Fe-4S]-[ferredoxin] + 2 ADP + 2 phosphate = protochlorophyllide a + reduced 2[4Fe-4S]-[ferredoxin] + 2 ATP + 2 H2O. It participates in porphyrin-containing compound metabolism; chlorophyll biosynthesis (light-independent). Its function is as follows. Component of the dark-operative protochlorophyllide reductase (DPOR) that uses Mg-ATP and reduced ferredoxin to reduce ring D of protochlorophyllide (Pchlide) to form chlorophyllide a (Chlide). This reaction is light-independent. The NB-protein (ChlN-ChlB) is the catalytic component of the complex. The chain is Light-independent protochlorophyllide reductase subunit N from Synechococcus sp. (strain CC9311).